The following is a 461-amino-acid chain: tRNA modification GTPase MnmE (461 aa).

R21, E87, and K126 together coordinate (6S)-5-formyl-5,6,7,8-tetrahydrofolate. The 163-residue stretch at 222-384 (QSTVVLYGEP…LLELLKSKLT (163 aa)) folds into the TrmE-type G domain. Position 232 (N232) interacts with K(+). Residues 232–237 (NTGKSS), 251–257 (SDVPGTT), and 276–279 (DTAG) each bind GTP. S236 contacts Mg(2+). 3 residues coordinate K(+): S251, V253, and T256. T257 contributes to the Mg(2+) binding site. K461 contributes to the (6S)-5-formyl-5,6,7,8-tetrahydrofolate binding site.

It belongs to the TRAFAC class TrmE-Era-EngA-EngB-Septin-like GTPase superfamily. TrmE GTPase family. In terms of assembly, homodimer. Heterotetramer of two MnmE and two MnmG subunits. It depends on K(+) as a cofactor.

It localises to the cytoplasm. Functionally, exhibits a very high intrinsic GTPase hydrolysis rate. Involved in the addition of a carboxymethylaminomethyl (cmnm) group at the wobble position (U34) of certain tRNAs, forming tRNA-cmnm(5)s(2)U34. The polypeptide is tRNA modification GTPase MnmE (Leptospira biflexa serovar Patoc (strain Patoc 1 / Ames)).